The primary structure comprises 416 residues: Gamma-glutamyl phosphate reductase (416 aa).

This sequence belongs to the gamma-glutamyl phosphate reductase family.

The protein resides in the cytoplasm. The catalysed reaction is L-glutamate 5-semialdehyde + phosphate + NADP(+) = L-glutamyl 5-phosphate + NADPH + H(+). It participates in amino-acid biosynthesis; L-proline biosynthesis; L-glutamate 5-semialdehyde from L-glutamate: step 2/2. Its function is as follows. Catalyzes the NADPH-dependent reduction of L-glutamate 5-phosphate into L-glutamate 5-semialdehyde and phosphate. The product spontaneously undergoes cyclization to form 1-pyrroline-5-carboxylate. In Actinobacillus succinogenes (strain ATCC 55618 / DSM 22257 / CCUG 43843 / 130Z), this protein is Gamma-glutamyl phosphate reductase.